The primary structure comprises 475 residues: 23S rRNA (uracil(1939)-C(5))-methyltransferase RlmD (475 aa).

Over residues 1–10 (MAMLGKRRPP) the composition is skewed to basic residues. The disordered stretch occupies residues 1–33 (MAMLGKRRPPRTANERVRRERGSATRRDDATAD). Residues 13–30 (ANERVRRERGSATRRDDA) are compositionally biased toward basic and acidic residues. In terms of domain architecture, TRAM spans 26–85 (RRDDATADGLSIERLAHDGRGVARDPHGKTVFVDQALPGERVRVAVHRQRKRFDEAHVVE). [4Fe-4S] cluster-binding residues include cysteine 98, cysteine 104, cysteine 107, and cysteine 183. Residues glutamine 294, phenylalanine 323, asparagine 328, glutamate 344, aspartate 371, and aspartate 388 each contribute to the S-adenosyl-L-methionine site. The active-site Nucleophile is the cysteine 414. The disordered stretch occupies residues 455–475 (TRDTPRGRSTSVEREDHGQGP). Residues 457-475 (DTPRGRSTSVEREDHGQGP) show a composition bias toward basic and acidic residues.

The protein belongs to the class I-like SAM-binding methyltransferase superfamily. RNA M5U methyltransferase family. RlmD subfamily.

The enzyme catalyses uridine(1939) in 23S rRNA + S-adenosyl-L-methionine = 5-methyluridine(1939) in 23S rRNA + S-adenosyl-L-homocysteine + H(+). Its function is as follows. Catalyzes the formation of 5-methyl-uridine at position 1939 (m5U1939) in 23S rRNA. This chain is 23S rRNA (uracil(1939)-C(5))-methyltransferase RlmD, found in Chromohalobacter salexigens (strain ATCC BAA-138 / DSM 3043 / CIP 106854 / NCIMB 13768 / 1H11).